Here is a 216-residue protein sequence, read N- to C-terminus: tRNA (guanine-N(7)-)-methyltransferase (216 aa).

S-adenosyl-L-methionine is bound by residues Glu-44, Glu-69, Asn-96, and Asp-118. Asp-118 is a catalytic residue. Lys-122 contributes to the substrate binding site. Positions 124–129 (RHEKRR) are interaction with RNA. Residues Asp-154 and 191–194 (TEYE) each bind substrate.

This sequence belongs to the class I-like SAM-binding methyltransferase superfamily. TrmB family.

The enzyme catalyses guanosine(46) in tRNA + S-adenosyl-L-methionine = N(7)-methylguanosine(46) in tRNA + S-adenosyl-L-homocysteine. Its pathway is tRNA modification; N(7)-methylguanine-tRNA biosynthesis. Functionally, catalyzes the formation of N(7)-methylguanine at position 46 (m7G46) in tRNA. This chain is tRNA (guanine-N(7)-)-methyltransferase, found in Geobacillus thermodenitrificans (strain NG80-2).